Consider the following 626-residue polypeptide: tRNA uridine 5-carboxymethylaminomethyl modification enzyme MnmG (626 aa).

Residue 13 to 18 (GGGHAG) participates in FAD binding. Residue 273–287 (GPRYCPSIEDKIHRF) participates in NAD(+) binding.

This sequence belongs to the MnmG family. Homodimer. Heterotetramer of two MnmE and two MnmG subunits. It depends on FAD as a cofactor.

It localises to the cytoplasm. In terms of biological role, NAD-binding protein involved in the addition of a carboxymethylaminomethyl (cmnm) group at the wobble position (U34) of certain tRNAs, forming tRNA-cmnm(5)s(2)U34. The chain is tRNA uridine 5-carboxymethylaminomethyl modification enzyme MnmG from Acinetobacter baumannii (strain SDF).